A 224-amino-acid polypeptide reads, in one-letter code: MSADFEGYEQDFAVLTAEITSKISRVPRLPPDEKKQMVANVEKQLEEARELLEQMDLEVREIPPQSRGMYSNRMRSYKQEMGKLETDFKRSRIAYSDEVRNELLGDAGNSSENQLIKLREERAHLLDNTERLERSSRRLEAGYQIAVETEQIGQEMLENLSHDRERIQRARERLRETDANLGKSSRILTGMLRRIIQNRILLVILGIIVVITILTAITFFVRGH.

The Cytoplasmic portion of the chain corresponds to 1 to 199 (MSADFEGYEQ…GMLRRIIQNR (199 aa)). Coiled coils occupy residues 31–92 (PDEK…KRSR) and 106–185 (DAGN…GKSS). Residues 200 to 220 (ILLVILGIIVVITILTAITFF) form a helical; Anchor for type IV membrane protein membrane-spanning segment. At 221 to 224 (VRGH) the chain is on the vesicular side.

This sequence belongs to the VTI1 family. In terms of assembly, interacts with distinct SNARE complexes that contain either STX5 or STX6. Interacts with NAPA and, to a lesser extent, with NAPG. Identified in a complex containing STX6, STX12, VAMP4 and VTI1A. In terms of tissue distribution, specifically expressed in the neuronal tissues cerebellum, cortex and hippocampus. Isoform 1/VTI1A is expressed in the same neuronal tissues but also in lung, liver, kidney and spleen.

Its subcellular location is the membrane. It is found in the cytoplasmic vesicle. The protein resides in the secretory vesicle. It localises to the synaptic vesicle membrane. The protein localises to the clathrin-coated vesicle membrane. Its subcellular location is the golgi apparatus membrane. V-SNARE that mediates vesicle transport pathways through interactions with t-SNAREs on the target membrane. These interactions are proposed to mediate aspects of the specificity of vesicle trafficking and to promote fusion of the lipid bilayers. Involved in vesicular transport from the late endosomes to the trans-Golgi network. Along with VAMP7, involved in an non-conventional RAB1-dependent traffic route to the cell surface used by KCNIP1 and KCND2. May be concerned with increased secretion of cytokines associated with cellular senescence. This chain is Vesicle transport through interaction with t-SNAREs homolog 1A (Vti1a), found in Rattus norvegicus (Rat).